Reading from the N-terminus, the 181-residue chain is Large ribosomal subunit protein uL6 (181 aa).

This sequence belongs to the universal ribosomal protein uL6 family. Part of the 50S ribosomal subunit.

Functionally, this protein binds to the 23S rRNA, and is important in its secondary structure. It is located near the subunit interface in the base of the L7/L12 stalk, and near the tRNA binding site of the peptidyltransferase center. This is Large ribosomal subunit protein uL6 from Coprothermobacter proteolyticus (strain ATCC 35245 / DSM 5265 / OCM 4 / BT).